The following is an 83-amino-acid chain: Normal mucosa of esophagus-specific gene 1 protein (83 aa).

The protein belongs to the complex I NDUFA4 subunit family. In terms of tissue distribution, strongly expressed in vertebrae, brain, intestine and stomach.

The protein localises to the nucleus. The protein is Normal mucosa of esophagus-specific gene 1 protein (Nmes1) of Mus musculus (Mouse).